The following is a 351-amino-acid chain: Cyanide hydratase (351 aa).

One can recognise a CN hydrolase domain in the interval 6-285 (YKAAAVTSEP…DGLLFVDIDL (280 aa)). Glutamate 46 functions as the Proton acceptor in the catalytic mechanism. Lysine 128 is a catalytic residue. Cysteine 163 serves as the catalytic Nucleophile.

The protein belongs to the carbon-nitrogen hydrolase superfamily. Nitrilase family. In terms of assembly, oligomer of dimers, forming left-handed helical fibers with a diameter of 13 nm but with lengths ranging from approximately 1 um at the leading edge of the peak to having approximately the same length and diameter at the trailing edge.

The enzyme catalyses formamide = hydrogen cyanide + H2O. Catalyzes the hydration of cyanide to formamide. Degradation of cyanide may be important for plant pathogenic fungi in infection of cyanogenic plants. The chain is Cyanide hydratase from Neurospora crassa (strain ATCC 24698 / 74-OR23-1A / CBS 708.71 / DSM 1257 / FGSC 987).